The chain runs to 378 residues: Acetylornithine deacetylase (378 aa).

H76 lines the Zn(2+) pocket. D78 is a catalytic residue. D108 is a binding site for Zn(2+). Residue E140 is part of the active site. Residues E141, E165, and H351 each contribute to the Zn(2+) site.

This sequence belongs to the peptidase M20A family. ArgE subfamily. As to quaternary structure, homodimer. Zn(2+) serves as cofactor. Requires Co(2+) as cofactor. The cofactor is glutathione.

It is found in the cytoplasm. It carries out the reaction N(2)-acetyl-L-ornithine + H2O = L-ornithine + acetate. It participates in amino-acid biosynthesis; L-arginine biosynthesis; L-ornithine from N(2)-acetyl-L-ornithine (linear): step 1/1. In terms of biological role, catalyzes the hydrolysis of the amide bond of N(2)-acetylated L-amino acids. Cleaves the acetyl group from N-acetyl-L-ornithine to form L-ornithine, an intermediate in L-arginine biosynthesis pathway, and a branchpoint in the synthesis of polyamines. This chain is Acetylornithine deacetylase, found in Vibrio vulnificus (strain CMCP6).